A 209-amino-acid polypeptide reads, in one-letter code: Ribonuclease HII (209 aa).

An RNase H type-2 domain is found at 18-209 (GLIAGVDEVG…FKPVKALLEG (192 aa)). 3 residues coordinate a divalent metal cation: aspartate 24, glutamate 25, and aspartate 116.

It belongs to the RNase HII family. Mn(2+) is required as a cofactor. It depends on Mg(2+) as a cofactor.

It localises to the cytoplasm. The enzyme catalyses Endonucleolytic cleavage to 5'-phosphomonoester.. Endonuclease that specifically degrades the RNA of RNA-DNA hybrids. This chain is Ribonuclease HII, found in Shewanella putrefaciens (strain CN-32 / ATCC BAA-453).